We begin with the raw amino-acid sequence, 123 residues long: Small ribosomal subunit protein uS13 (123 aa).

The segment at 97-123 (PVRGQRTHTNAKTRKGRSRLPVAAKKK) is disordered.

Belongs to the universal ribosomal protein uS13 family. In terms of assembly, part of the 30S ribosomal subunit. Forms a loose heterodimer with protein S19. Forms two bridges to the 50S subunit in the 70S ribosome.

Functionally, located at the top of the head of the 30S subunit, it contacts several helices of the 16S rRNA. In the 70S ribosome it contacts the 23S rRNA (bridge B1a) and protein L5 of the 50S subunit (bridge B1b), connecting the 2 subunits; these bridges are implicated in subunit movement. Contacts the tRNAs in the A and P-sites. This chain is Small ribosomal subunit protein uS13, found in Ehrlichia ruminantium (strain Gardel).